A 215-amino-acid chain; its full sequence is MSKVYDWFEERLEIQAIADDITSKYVPPHVNIFYCLGGITLTCFLVQVATGFAMTFYYRPTVTEAFASVQYIMTEANFGWLIRSVHRWSASMMVLMMILHVFRVYLTGGFKKPRELTWVTGVVLAVLTASFGVTGYSLPRDQIGYWAVKIVTGVPDAIPVIGSPLVELLRGSASVGQSTLTRFYSLHTFVLPLVSAVFMLIHFLMIRKQGISGPL.

Residues isoleucine 32–phenylalanine 52 form a helical membrane-spanning segment. Cysteine 35 serves as a coordination point for heme c. Heme b-binding residues include histidine 86 and histidine 100. Helical transmembrane passes span alanine 90–phenylalanine 110, leucine 116–tyrosine 136, and leucine 186–isoleucine 206. Residues histidine 187 and histidine 202 each coordinate heme b.

This sequence belongs to the cytochrome b family. PetB subfamily. As to quaternary structure, the 4 large subunits of the cytochrome b6-f complex are cytochrome b6, subunit IV (17 kDa polypeptide, PetD), cytochrome f and the Rieske protein, while the 4 small subunits are PetG, PetL, PetM and PetN. The complex functions as a dimer. Requires heme b as cofactor. The cofactor is heme c.

It localises to the plastid. It is found in the chloroplast thylakoid membrane. Its function is as follows. Component of the cytochrome b6-f complex, which mediates electron transfer between photosystem II (PSII) and photosystem I (PSI), cyclic electron flow around PSI, and state transitions. This Pelargonium hortorum (Common geranium) protein is Cytochrome b6.